Consider the following 374-residue polypeptide: MTLAYAPTAQTITIRNDWTKAEVEALFAMPFNDLLFNAQVVHRQHFNPNEVQVSTLLSIKTGACPEDCKYCPQSARYDTGLEKERLLEIEKVIQRAKEAKQVGSTRFCMGAAWRNPRDRDMPYILKMVEEVKSLGLETCMTLGMLTRDQAVALKQAGLDYYNHNLDTSPEYYGDIITTRTYEDRLNTLENVRAAGMNVCSGGIVGMGETVSDRASMLVQLANLPEQPQSVPINMLVKVKGTPLDSVEDLDYFEFIRTIAVARIMMPKSHVRLSAGREAMNEQMQAMCFMAGANSIFYGCKLLTTSNPDTHEDVMLFKKLGINTERTRDYSDEAHQQVLEEEIAQQQEQAEGSNDLFIDATKPKVAAKQQHATEA.

The Radical SAM core domain maps to 49 to 276; sequence NEVQVSTLLS…KSHVRLSAGR (228 aa). 3 residues coordinate [4Fe-4S] cluster: cysteine 64, cysteine 68, and cysteine 71. [2Fe-2S] cluster contacts are provided by cysteine 108, cysteine 139, cysteine 199, and arginine 271. Residues 344–374 are disordered; it reads QQQEQAEGSNDLFIDATKPKVAAKQQHATEA.

Belongs to the radical SAM superfamily. Biotin synthase family. As to quaternary structure, homodimer. [4Fe-4S] cluster serves as cofactor. [2Fe-2S] cluster is required as a cofactor.

The catalysed reaction is (4R,5S)-dethiobiotin + (sulfur carrier)-SH + 2 reduced [2Fe-2S]-[ferredoxin] + 2 S-adenosyl-L-methionine = (sulfur carrier)-H + biotin + 2 5'-deoxyadenosine + 2 L-methionine + 2 oxidized [2Fe-2S]-[ferredoxin]. It participates in cofactor biosynthesis; biotin biosynthesis; biotin from 7,8-diaminononanoate: step 2/2. Catalyzes the conversion of dethiobiotin (DTB) to biotin by the insertion of a sulfur atom into dethiobiotin via a radical-based mechanism. This chain is Biotin synthase, found in Alteromonas mediterranea (strain DSM 17117 / CIP 110805 / LMG 28347 / Deep ecotype).